The sequence spans 938 residues: Collagen alpha-1(I) chain (938 aa).

A disordered region spans residues 1–938 (GGISVPGPMG…PGPPGPPGPP (938 aa)). 4-hydroxyproline occurs at positions 18, 21, 24, 33, 36, 39, 54, 69, 75, 84, and 90. Low complexity predominate over residues 26 to 45 (PQGFQGPPGEPGEPGASGPM). Over residues 57–71 (NGDDGEAGKPGRPGE) the composition is skewed to basic and acidic residues. At Lys-93 the chain carries 5-hydroxylysine; alternate. O-linked (Gal...) hydroxylysine; alternate glycosylation occurs at Lys-93. Phosphoserine is present on Ser-99. Low complexity predominate over residues 107–135 (DAGPAGPKGRPGASGPAGARGNDGATGAA). 12 positions are modified to 4-hydroxyproline: Pro-117, Pro-138, Pro-147, Pro-150, Pro-177, Pro-180, Pro-192, Pro-198, Pro-207, Pro-213, Pro-216, and Pro-231. Pro residues predominate over residues 137-149 (PPGPTGPAGPPGF). Residues 183 to 222 (AGAAGPAGNPGADGQPGAKGANGAPGIAGAPGFPGARGPS) are compositionally biased toward low complexity. A 5-hydroxylysine modification is found at Lys-234. 4-hydroxyproline occurs at positions 240, 243, 255, 264, 279, 285, 294, and 300. Positions 289–298 (GERGGPGSRG) are enriched in gly residues. Position 309 is a 5-hydroxylysine (Lys-309). Residues Pro-314, Pro-323, Pro-329, Pro-335, Pro-344, Pro-347, Pro-356, Pro-365, Pro-371, Pro-383, Pro-392, Pro-401, Pro-404, Pro-422, Pro-439, Pro-445, Pro-451, Pro-458, Pro-464, Pro-476, Pro-485, Pro-497, Pro-503, Pro-509, and Pro-518 each carry the 4-hydroxyproline modification. Low complexity predominate over residues 338–364 (KGLTGSPGSPGPDGKTGPPGPAGQDGR). Low complexity predominate over residues 373–392 (ARGQAGVMGFPGPKGAAGEP). Lys-530 carries the 5-hydroxylysine modification. Pro-536, Pro-551, and Pro-557 each carry 4-hydroxyproline. Residues 563–577 (SGPSGPAGPTGARGA) show a composition bias toward low complexity. At Ser-566 the chain carries Phosphoserine. A 4-hydroxyproline mark is found at Pro-578, Pro-584, Pro-587, Pro-596, Pro-602, Pro-620, Pro-629, and Pro-638. The segment covering 590-617 (AGFAGPPGADGQPGAKGEPGDAGAKGDA) has biased composition (low complexity). Over residues 619-631 (PPGPAGPTGPPGP) the composition is skewed to pro residues. Lys-641 carries the 5-hydroxylysine modification. A compositionally biased stretch (low complexity) spans 646–662 (SAGPPGATGFPGAAGRV). 2 positions are modified to 4-hydroxyproline: Pro-650 and Pro-656. At Pro-664 the chain carries 3-hydroxyproline. 4-hydroxyproline occurs at positions 665, 674, 677, 693, 703, 712, 730, 739, 742, 748, 763, 769, 775, 784, and 790. The segment covering 762–772 (PPGPMGPPGLA) has biased composition (pro residues). A 5-hydroxylysine modification is found at Lys-799. The span at 807-822 (PGPPGAPGAPGAPGPV) shows a compositional bias: pro residues. Residues Pro-810, Pro-813, and Pro-816 each carry the 4-hydroxyproline modification. Low complexity predominate over residues 843–867 (AGPAGARGPAGPQGPRRGFSGLQGP). Pro-871, Pro-874, Pro-892, and Pro-907 each carry 4-hydroxyproline. The span at 874 to 907 (PGEQGPSGASGPAGPRGPPGSAGSPGKDGLNGLP) shows a compositional bias: low complexity. Pro-912 carries the 3-hydroxyproline modification. Pro-913 is modified (4-hydroxyproline). A compositionally biased stretch (pro residues) spans 923–938 (VGPPGPPGPPGPPGPP). 3-hydroxyproline is present on Pro-925. Pro-926 carries the post-translational modification 4-hydroxyproline. The residue at position 928 (Pro-928) is a 3-hydroxyproline. The residue at position 929 (Pro-929) is a 4-hydroxyproline. Pro-931 carries the post-translational modification 3-hydroxyproline. 4-hydroxyproline occurs at positions 932, 935, and 938.

Belongs to the fibrillar collagen family. In terms of assembly, trimers of one alpha 2(I) and two alpha 1(I) chains. Contains mostly 4-hydroxyproline. Proline residues at the third position of the tripeptide repeating unit (G-X-Y) are hydroxylated in some or all of the chains. In terms of processing, contains 3-hydroxyproline at a few sites. This modification occurs on the first proline residue in the sequence motif Gly-Pro-Hyp, where Hyp is 4-hydroxyproline. Post-translationally, lysine residues at the third position of the tripeptide repeating unit (G-X-Y) are 5-hydroxylated in some or all of the chains. O-glycosylated on hydroxylated lysine residues. The O-linked glycan consists of a Glc-Gal disaccharide. As to expression, expressed in bones.

Its subcellular location is the secreted. It localises to the extracellular space. The protein localises to the extracellular matrix. Functionally, type I collagen is a member of group I collagen (fibrillar forming collagen). This Megalonyx jeffersonii (Jefferson's ground sloth) protein is Collagen alpha-1(I) chain.